The primary structure comprises 81 residues: Large ribosomal subunit protein bL31B (81 aa).

This sequence belongs to the bacterial ribosomal protein bL31 family. Type B subfamily. In terms of assembly, part of the 50S ribosomal subunit.

This is Large ribosomal subunit protein bL31B from Lactobacillus helveticus (strain DPC 4571).